Reading from the N-terminus, the 348-residue chain is uncharacterized protein (348 aa).

Functionally, may be involved in apoptosis regulation. This is an uncharacterized protein from Rattus norvegicus (Rat).